The chain runs to 210 residues: Secreted effector protein SteA (210 aa).

It localises to the secreted. The protein resides in the host cytoplasm. Functionally, effector proteins function to alter host cell physiology and promote bacterial survival in host tissues. Could be required for passage of bacteria from the peritoneal cavity into the spleen, for survival and replication within host cells, or for avoiding host immune response. In Salmonella typhimurium (strain 14028s / SGSC 2262), this protein is Secreted effector protein SteA (steA).